The chain runs to 476 residues: Glycogen synthase (476 aa).

Lys15 contacts ADP-alpha-D-glucose.

This sequence belongs to the glycosyltransferase 1 family. Bacterial/plant glycogen synthase subfamily.

It catalyses the reaction [(1-&gt;4)-alpha-D-glucosyl](n) + ADP-alpha-D-glucose = [(1-&gt;4)-alpha-D-glucosyl](n+1) + ADP + H(+). Its pathway is glycan biosynthesis; glycogen biosynthesis. Synthesizes alpha-1,4-glucan chains using ADP-glucose. The protein is Glycogen synthase of Bacillus anthracis.